The primary structure comprises 303 residues: MGLLEGTFLDWEYESYPSYEDFAVLPLFALFFPSVRFLLDRFVFEKVARRLIFGKGQEVVENETDDRRRRIRKFKESAWKCIYFLSAEVFALVVTYNEPWFTNTRYFWVGPGDQVWPDQMYKSKLKALYMYTGGFYTYSIFALIFWETRRSDFGVSMSHHVATAILIVLSYNIRFARVGSVVLAIHDASDIFLEIGKMSKYSGAEALASFRYLCLSWIILRLIYYPFWVLWSTSYEVLQTLDKEKHKVDGPIYYYIFNSLLFCLLVLHIYWWVLIYRMLVKQIQARGQLSDDVRSDSEDEHED.

Transmembrane regions (helical) follow at residues 19 to 39 (YEDF…RFLL), 81 to 101 (CIYF…EPWF), 127 to 147 (ALYM…IFWE), 153 to 173 (FGVS…SYNI), 212 to 232 (YLCL…VLWS), and 255 to 275 (YIFN…WVLI). Positions 72 to 284 (RKFKESAWKC…IYRMLVKQIQ (213 aa)) constitute a TLC domain.

It is found in the endoplasmic reticulum membrane. Mediates resistance to sphinganine-analog mycotoxins (SAMs) by restoring the sphingolipid biosynthesis. Could salvage the transport of GPI-anchored proteins from the endoplasmic reticulum to the Golgi apparatus in ceramides-depleted cells after SAM exposure. The protein is ASC1-like protein of Solanum lycopersicum (Tomato).